Consider the following 212-residue polypeptide: Adenylate kinase (212 aa).

Gly-10 to Thr-15 serves as a coordination point for ATP. The tract at residues Ser-30–Val-59 is NMP. Residues Thr-31, Arg-36, Glu-57–Val-59, Gly-86–Arg-89, and Gln-93 contribute to the AMP site. Positions Gly-127–Asp-159 are LID. Residues Arg-128 and Thr-137–Phe-138 each bind ATP. AMP is bound by residues Arg-156 and Arg-167. An ATP-binding site is contributed by Gln-195.

This sequence belongs to the adenylate kinase family. Monomer.

It localises to the cytoplasm. It carries out the reaction AMP + ATP = 2 ADP. Its pathway is purine metabolism; AMP biosynthesis via salvage pathway; AMP from ADP: step 1/1. Catalyzes the reversible transfer of the terminal phosphate group between ATP and AMP. Plays an important role in cellular energy homeostasis and in adenine nucleotide metabolism. The protein is Adenylate kinase of Streptococcus pyogenes serotype M1.